The following is a 1893-amino-acid chain: Plexin-A4 (1893 aa).

The N-terminal stretch at 1–23 (MKAMPWNWTCLLSHLLVVGMGSS) is a signal peptide. One can recognise a Sema domain in the interval 24 to 506 (TLLPRQPPQL…SERQLTRVPV (483 aa)). The Extracellular segment spans residues 24-1236 (TLLPRQPPQL…IAPDSPLSLP (1213 aa)). Cystine bridges form between cysteine 94–cysteine 103, cysteine 129–cysteine 137, cysteine 283–cysteine 404, cysteine 299–cysteine 355, cysteine 373–cysteine 392, cysteine 509–cysteine 526, cysteine 515–cysteine 557, cysteine 518–cysteine 535, cysteine 529–cysteine 541, and cysteine 592–cysteine 611. The region spanning 508–558 (SCGQYRSCGECLGSGDPHCGWCVLHNTCTRKERCERSREPRRFASEMKQCV) is the PSI 1 domain. Residue asparagine 654 is glycosylated (N-linked (GlcNAc...) asparagine). PSI domains lie at 654-701 (NCSV…EDCP) and 802-855 (KCGA…SKCT). 4 IPT/TIG domains span residues 857-951 (PRIT…YYFM), 953-1036 (LTLA…FQYV), 1039-1138 (PTIV…FTYY), and 1141-1229 (PVFE…YIAP). N-linked (GlcNAc...) asparagine glycans are attached at residues asparagine 1006, asparagine 1131, and asparagine 1179. The chain crosses the membrane as a helical span at residues 1237–1257 (AIVSIAVAGGLLIIFIVAVLI). Topologically, residues 1258–1893 (AYKRKSRESD…QVITLMSLDS (636 aa)) are cytoplasmic. Lysine 1349 bears the N6-acetyllysine mark.

This sequence belongs to the plexin family. In terms of assembly, interacts with NRP1 and NRP2. Expressed in the developing nervous system. Widely expressed in both the central and peripheral nervous systems. Expressed in the peripheral ganglia, somatosensory, olfactory, visual, auditory and equilibrium systems.

It is found in the cell membrane. Functionally, coreceptor for SEMA3A. Necessary for signaling by class 3 semaphorins and subsequent remodeling of the cytoskeleton. Plays a role in axon guidance in the developing nervous system. Class 3 semaphorins bind to a complex composed of a neuropilin and a plexin. The plexin modulates the affinity of the complex for specific semaphorins, and its cytoplasmic domain is required for the activation of down-stream signaling events in the cytoplasm. The chain is Plexin-A4 (Plxna4) from Mus musculus (Mouse).